A 294-amino-acid polypeptide reads, in one-letter code: Ethylene-inducing xylanase 3 (294 aa).

The signal sequence occupies residues 1–19 (MVCFSSLFVAASAIAGVFA). The 196-residue stretch at 31–226 (QSTPSSQGTH…SSGSARINVA (196 aa)) folds into the GH11 domain. The active-site Nucleophile is the E122. The active-site Proton donor is E213. A CBM1 domain is found at 259 to 294 (SCAARWGQCGGSGWNGATCCSAGTCQAQNQWYSQCL).

The protein belongs to the glycosyl hydrolase 11 (cellulase G) family.

The enzyme catalyses Endohydrolysis of (1-&gt;4)-beta-D-xylosidic linkages in xylans.. It participates in glycan degradation; xylan degradation. Endo-1,4-beta-xylanase involved in the hydrolysis of xylan, a major structural heterogeneous polysaccharide found in plant biomass representing the second most abundant polysaccharide in the biosphere, after cellulose. Exhibits immunity-inducing activity in Nicotiana benthamiana. Can induce strong oxidative burst, activate the expression of defense-related genes, and increase resistance against oomycete and fungal pathogens in N.benthamiana. The chain is Ethylene-inducing xylanase 3 from Verticillium dahliae (strain VdLs.17 / ATCC MYA-4575 / FGSC 10137) (Verticillium wilt).